We begin with the raw amino-acid sequence, 158 residues long: Transcription elongation factor GreA (158 aa).

Residues 5-75 are a coiled coil; that stretch reads EKLPMLAEGY…DLEDRVSRAQ (71 aa).

The protein belongs to the GreA/GreB family.

Its function is as follows. Necessary for efficient RNA polymerase transcription elongation past template-encoded arresting sites. The arresting sites in DNA have the property of trapping a certain fraction of elongating RNA polymerases that pass through, resulting in locked ternary complexes. Cleavage of the nascent transcript by cleavage factors such as GreA or GreB allows the resumption of elongation from the new 3'terminus. GreA releases sequences of 2 to 3 nucleotides. In Novosphingobium aromaticivorans (strain ATCC 700278 / DSM 12444 / CCUG 56034 / CIP 105152 / NBRC 16084 / F199), this protein is Transcription elongation factor GreA.